A 105-amino-acid chain; its full sequence is Large ribosomal subunit protein uL23 (105 aa).

The protein belongs to the universal ribosomal protein uL23 family. In terms of assembly, part of the 50S ribosomal subunit. Contacts protein L29, and trigger factor when it is bound to the ribosome.

Its function is as follows. One of the early assembly proteins it binds 23S rRNA. One of the proteins that surrounds the polypeptide exit tunnel on the outside of the ribosome. Forms the main docking site for trigger factor binding to the ribosome. This is Large ribosomal subunit protein uL23 from Chloroherpeton thalassium (strain ATCC 35110 / GB-78).